Consider the following 468-residue polypeptide: Glutamate--tRNA ligase (468 aa).

5-7 (RIA) lines the L-glutamate pocket. The short motif at 8 to 18 (PSPTGDPHVGT) is the 'HIGH' region element. His-15 serves as a coordination point for ATP. L-glutamate-binding positions include Glu-41, 187 to 191 (YHLAN), and Arg-205. Residues Glu-208, Leu-236, 243-247 (KISKR), and Lys-246 contribute to the ATP site. Positions 243–247 (KISKR) match the 'KMSKS' region motif. The tract at residues 432-447 (QPLRAALTGSLETPGL) is interaction with tRNA.

This sequence belongs to the class-I aminoacyl-tRNA synthetase family. Glutamate--tRNA ligase type 1 subfamily. Monomer.

It is found in the cytoplasm. The enzyme catalyses tRNA(Glu) + L-glutamate + ATP = L-glutamyl-tRNA(Glu) + AMP + diphosphate. Its activity is regulated as follows. In the absence of bound tRNA, ATP is bound in a non-productive mode, and the enzyme cannot activate amino acids. Catalyzes the attachment of glutamate to tRNA(Glu) in a two-step reaction: glutamate is first activated by ATP to form Glu-AMP and then transferred to the acceptor end of tRNA(Glu). This chain is Glutamate--tRNA ligase, found in Thermus thermophilus (strain ATCC 27634 / DSM 579 / HB8).